The following is a 460-amino-acid chain: ATP synthase subunit beta (460 aa).

ATP is bound at residue 149-156; it reads GGAGVGKT.

The protein belongs to the ATPase alpha/beta chains family. F-type ATPases have 2 components, CF(1) - the catalytic core - and CF(0) - the membrane proton channel. CF(1) has five subunits: alpha(3), beta(3), gamma(1), delta(1), epsilon(1). CF(0) has three main subunits: a(1), b(2) and c(9-12). The alpha and beta chains form an alternating ring which encloses part of the gamma chain. CF(1) is attached to CF(0) by a central stalk formed by the gamma and epsilon chains, while a peripheral stalk is formed by the delta and b chains.

Its subcellular location is the cell inner membrane. The catalysed reaction is ATP + H2O + 4 H(+)(in) = ADP + phosphate + 5 H(+)(out). Produces ATP from ADP in the presence of a proton gradient across the membrane. The catalytic sites are hosted primarily by the beta subunits. This chain is ATP synthase subunit beta, found in Nitrosomonas europaea (strain ATCC 19718 / CIP 103999 / KCTC 2705 / NBRC 14298).